Consider the following 64-residue polypeptide: Metallothionein-like protein 1 (64 aa).

Belongs to the metallothionein superfamily. Type 15 family.

In terms of biological role, metallothioneins have a high content of cysteine residues that bind various heavy metals. The sequence is that of Metallothionein-like protein 1 (MT1) from Prunus avium (Cherry).